A 310-amino-acid polypeptide reads, in one-letter code: Glutamyl-Q tRNA(Asp) synthetase (310 aa).

L-glutamate contacts are provided by residues 24–28 (RFAPS) and Glu60. Positions 27-37 (PSPSGPLHFGS) match the 'HIGH' region motif. The Zn(2+) site is built by Cys116, Cys118, Tyr130, and Cys134. L-glutamate-binding residues include Tyr187 and Arg205. Positions 243–247 (KLSKQ) match the 'KMSKS' region motif. Residue Lys246 coordinates ATP.

Belongs to the class-I aminoacyl-tRNA synthetase family. GluQ subfamily. The cofactor is Zn(2+).

Its function is as follows. Catalyzes the tRNA-independent activation of glutamate in presence of ATP and the subsequent transfer of glutamate onto a tRNA(Asp). Glutamate is transferred on the 2-amino-5-(4,5-dihydroxy-2-cyclopenten-1-yl) moiety of the queuosine in the wobble position of the QUC anticodon. This Photobacterium profundum (strain SS9) protein is Glutamyl-Q tRNA(Asp) synthetase.